Consider the following 124-residue polypeptide: Small ribosomal subunit protein uS12 (124 aa).

Residues 1–32 are disordered; it reads MPTIQQLVRKGRQDKVEKTKTPALKGSPQRRG. Residues 11 to 20 are compositionally biased toward basic and acidic residues; sequence GRQDKVEKTK. 3-methylthioaspartic acid is present on Asp89.

This sequence belongs to the universal ribosomal protein uS12 family. As to quaternary structure, part of the 30S ribosomal subunit. Contacts proteins S8 and S17. May interact with IF1 in the 30S initiation complex.

Functionally, with S4 and S5 plays an important role in translational accuracy. Interacts with and stabilizes bases of the 16S rRNA that are involved in tRNA selection in the A site and with the mRNA backbone. Located at the interface of the 30S and 50S subunits, it traverses the body of the 30S subunit contacting proteins on the other side and probably holding the rRNA structure together. The combined cluster of proteins S8, S12 and S17 appears to hold together the shoulder and platform of the 30S subunit. This is Small ribosomal subunit protein uS12 from Frankia alni (strain DSM 45986 / CECT 9034 / ACN14a).